The following is a 356-amino-acid chain: UDP-N-acetylglucosamine--N-acetylmuramyl-(pentapeptide) pyrophosphoryl-undecaprenol N-acetylglucosamine transferase (356 aa).

UDP-N-acetyl-alpha-D-glucosamine-binding residues include S195 and Q287.

Belongs to the glycosyltransferase 28 family. MurG subfamily.

It is found in the cell membrane. It catalyses the reaction Mur2Ac(oyl-L-Ala-gamma-D-Glu-L-Lys-D-Ala-D-Ala)-di-trans,octa-cis-undecaprenyl diphosphate + UDP-N-acetyl-alpha-D-glucosamine = beta-D-GlcNAc-(1-&gt;4)-Mur2Ac(oyl-L-Ala-gamma-D-Glu-L-Lys-D-Ala-D-Ala)-di-trans,octa-cis-undecaprenyl diphosphate + UDP + H(+). It participates in cell wall biogenesis; peptidoglycan biosynthesis. In terms of biological role, cell wall formation. Catalyzes the transfer of a GlcNAc subunit on undecaprenyl-pyrophosphoryl-MurNAc-pentapeptide (lipid intermediate I) to form undecaprenyl-pyrophosphoryl-MurNAc-(pentapeptide)GlcNAc (lipid intermediate II). This is UDP-N-acetylglucosamine--N-acetylmuramyl-(pentapeptide) pyrophosphoryl-undecaprenol N-acetylglucosamine transferase from Streptococcus gordonii (strain Challis / ATCC 35105 / BCRC 15272 / CH1 / DL1 / V288).